A 316-amino-acid polypeptide reads, in one-letter code: Ribosomal RNA small subunit methyltransferase H (316 aa).

Residues 36 to 38, D56, F83, D104, and Q111 contribute to the S-adenosyl-L-methionine site; that span reads GGH.

It belongs to the methyltransferase superfamily. RsmH family.

The protein localises to the cytoplasm. The enzyme catalyses cytidine(1402) in 16S rRNA + S-adenosyl-L-methionine = N(4)-methylcytidine(1402) in 16S rRNA + S-adenosyl-L-homocysteine + H(+). Specifically methylates the N4 position of cytidine in position 1402 (C1402) of 16S rRNA. The protein is Ribosomal RNA small subunit methyltransferase H of Protochlamydia amoebophila (strain UWE25).